Reading from the N-terminus, the 369-residue chain is Fructose-bisphosphate aldolase 2 (369 aa).

Asp-40 is a binding site for dihydroxyacetone phosphate. 2 residues coordinate D-glyceraldehyde 3-phosphate: Ser-42 and Thr-45. Position 49 (Arg-49) interacts with beta-D-fructose 1,6-bisphosphate. Lys-113 is a D-glyceraldehyde 3-phosphate binding site. Dihydroxyacetone phosphate is bound at residue Lys-152. Glu-195 provides a ligand contact to D-glyceraldehyde 3-phosphate. Glu-195 (proton acceptor) is an active-site residue. Residues Lys-237, Ser-279, and Gly-280 each contribute to the dihydroxyacetone phosphate site. Catalysis depends on Lys-237, which acts as the Schiff-base intermediate with dihydroxyacetone phosphate. Beta-D-fructose 1,6-bisphosphate contacts are provided by residues 279–281 (SGG) and Ser-307. Residues Gly-309 and Arg-310 each coordinate dihydroxyacetone phosphate. Arg-310 contacts beta-D-fructose 1,6-bisphosphate.

This sequence belongs to the class I fructose-bisphosphate aldolase family.

The protein resides in the cytoplasm. It is found in the membrane. It localises to the host cell membrane. It catalyses the reaction beta-D-fructose 1,6-bisphosphate = D-glyceraldehyde 3-phosphate + dihydroxyacetone phosphate. The protein operates within carbohydrate degradation; glycolysis; D-glyceraldehyde 3-phosphate and glycerone phosphate from D-glucose: step 4/4. Functionally, plays a key role in glycolysis by catalyzing the cleavage of fructose 1,6-bisphosphate into dihydroxyacetone phosphate and glyceraldehyde 3-phosphate. The protein is Fructose-bisphosphate aldolase 2 (ALDO2) of Plasmodium berghei (strain Anka).